The following is a 264-amino-acid chain: Thymidylate synthase (264 aa).

Position 21 (arginine 21) interacts with dUMP. Position 51 (histidine 51) interacts with (6R)-5,10-methylene-5,6,7,8-tetrahydrofolate. Position 126–127 (126–127) interacts with dUMP; it reads RR. Catalysis depends on cysteine 146, which acts as the Nucleophile. DUMP is bound by residues 166–169, asparagine 177, and 207–209; these read RSAD and HIY. Aspartate 169 serves as a coordination point for (6R)-5,10-methylene-5,6,7,8-tetrahydrofolate. A (6R)-5,10-methylene-5,6,7,8-tetrahydrofolate-binding site is contributed by alanine 263.

This sequence belongs to the thymidylate synthase family. Bacterial-type ThyA subfamily. As to quaternary structure, homodimer.

It localises to the cytoplasm. It carries out the reaction dUMP + (6R)-5,10-methylene-5,6,7,8-tetrahydrofolate = 7,8-dihydrofolate + dTMP. The protein operates within pyrimidine metabolism; dTTP biosynthesis. Functionally, catalyzes the reductive methylation of 2'-deoxyuridine-5'-monophosphate (dUMP) to 2'-deoxythymidine-5'-monophosphate (dTMP) while utilizing 5,10-methylenetetrahydrofolate (mTHF) as the methyl donor and reductant in the reaction, yielding dihydrofolate (DHF) as a by-product. This enzymatic reaction provides an intracellular de novo source of dTMP, an essential precursor for DNA biosynthesis. The sequence is that of Thymidylate synthase from Coxiella burnetii (strain Dugway 5J108-111).